The sequence spans 421 residues: MSKATEQNDKLKRAIIISAVLHVILFAALIWSSFDENIEASAGGGGGSSIDAVMVDSGAVVEQYKRMQSQESSAKRSDEQRKMKEQQAAEELREKQAAEQERLKQLEKERLAAQEQKKQAEEAAKQAELKQKQAEEAAAKAAADAKAKAEADAKAAEEAAKKAAADAKKKAEAEAAKAAAEAQKKAEAAAAALKKKAEAAEAAAAEARKKAATEAAEKAKAEAEKKAAAEKAAADKKAAAEKAAADKKAAEKAAAEKAAADKKAAAEKAAADKKAAAAKAAAEKAAAAKAAAEADDIFGELSSGKNAPKTGGGAKGNNASPAGSGNTKNNGASGADINNYAGQIKSAIESKFYDASSYAGKTCTLRIKLAPDGMLLDIKPEGGDPALCQAALAAAKLAKIPKPPSQAVYEVFKNAPLDFKP.

The Cytoplasmic portion of the chain corresponds to 1-13; that stretch reads MSKATEQNDKLKR. The helical transmembrane segment at 14–34 threads the bilayer; sequence AIIISAVLHVILFAALIWSSF. Residues 35–421 lie on the Periplasmic side of the membrane; sequence DENIEASAGG…FKNAPLDFKP (387 aa). Residues 48–310 form a domain II (alpha-helical) region; that stretch reads SSIDAVMVDS…LSSGKNAPKT (263 aa). The interval 65–266 is disordered; the sequence is KRMQSQESSA…KAAADKKAAA (202 aa). Composition is skewed to basic and acidic residues over residues 73 to 175 and 206 to 266; these read SAKR…EAEA and EARK…KAAA. Tandem repeats lie at residues 224-229, 230-234, 235-240, 241-245, 246-250, 251-255, 256-260, 261-266, 267-271, 272-277, 278-282, 283-287, and 288-292. The interval 224–292 is 13 X tandem repeats of [EDA]-K(1,2)-A(2,4); that stretch reads EKKAAAEKAA…EKAAAAKAAA (69 aa). Residues 300 to 336 form a disordered region; sequence ELSSGKNAPKTGGGAKGNNASPAGSGNTKNNGASGAD. The domain III (functional) stretch occupies residues 311–421; the sequence is GGGAKGNNAS…FKNAPLDFKP (111 aa). Residues 317–332 show a composition bias toward polar residues; sequence NNASPAGSGNTKNNGA. A disulfide bridge links C363 with C388.

Belongs to the TolA family. In terms of assembly, the Tol-Pal system is composed of five core proteins: the inner membrane proteins TolA, TolQ and TolR, the periplasmic protein TolB and the outer membrane protein Pal. They form a network linking the inner and outer membranes and the peptidoglycan layer. TolA interacts with TolQ and TolR via its N-terminal domain. Interacts with CpoB, and with the trimeric porins OmpC, OmpF, PhoE and LamB via its central domain. Interacts with TolB via its C-terminal domain. Also interacts with Pal via its C-terminal domain. This interaction is proton motive force dependent and requires TolQ and TolR.

Its subcellular location is the cell inner membrane. Functionally, part of the Tol-Pal system, which plays a role in outer membrane invagination during cell division and is important for maintaining outer membrane integrity. The Tol-Pal system is also required for polar localization of chemoreceptors clusters. The system also appears to be required for the activity of several outer membrane-localized enzymes with cell wall remodeling activity. Is involved in the uptake of group A colicins (colicins A, E1, E2, E3, and K) and in the uptake of filamentous phage DNA. This is Tol-Pal system protein TolA from Escherichia coli (strain K12).